The chain runs to 91 residues: ITCGQVSSNLAPCINYVKGGGAVPPACCNGIRNVNNLARTTADRRAACNCLKQLSGSIPGVNPNNAAALPGKCGVNVPYKISASTNCATVK.

Disulfide bonds link C3/C50, C13/C27, C28/C73, and C48/C87.

The protein belongs to the plant LTP family.

Its function is as follows. Plant non-specific lipid-transfer proteins transfer phospholipids as well as galactolipids across membranes. May play a role in wax or cutin deposition in the cell walls of expanding epidermal cells and certain secretory tissues. In Prunus domestica (Garden plum), this protein is Non-specific lipid-transfer protein 1.